Consider the following 135-residue polypeptide: MNRDIGKNAERELVSILRGEGFNAVRIPTSNSSPNPLPDIFATKGNTLLSIECKSTWENKVKVKEHQVRKLLDFLSMFTMKGVPLIAIKFKQVHEWRVLVPEKAEDIIVTIDNSIPIEDLFKILEKRIEEKILTP.

Residues E10, D39, and E52 each coordinate Mg(2+).

It belongs to the Holliday junction resolvase Hjc family. Hje subfamily. As to quaternary structure, homodimer. Mg(2+) is required as a cofactor.

The catalysed reaction is Endonucleolytic cleavage at a junction such as a reciprocal single-stranded crossover between two homologous DNA duplexes (Holliday junction).. In terms of biological role, a structure-specific endonuclease that resolves Holliday junction (HJ) intermediates during genetic recombination. Acts only on 4-way DNA junctions in a sequence non-specific manner; introduces paired nicks in opposing strands 2 bases 3' of the point of strand exchange only on continuous strands of 4-way junction DNA. Cleaves both mobile and immobile junctions. The chain is Crossover junction endodeoxyribonuclease Hje (hje) from Saccharolobus solfataricus (strain ATCC 35092 / DSM 1617 / JCM 11322 / P2) (Sulfolobus solfataricus).